The primary structure comprises 524 residues: Cytochrome P450 704B1 (524 aa).

Residues 2–22 (SLCLVIACMVTSWIFLHRWGQ) form a helical membrane-spanning segment. Position 471 (Cys471) interacts with heme.

The protein belongs to the cytochrome P450 family. Heme serves as cofactor.

The protein resides in the membrane. The catalysed reaction is an omega-methyl-long-chain fatty acid + reduced [NADPH--hemoprotein reductase] + O2 = an omega-hydroxy-long-chain fatty acid + oxidized [NADPH--hemoprotein reductase] + H2O + H(+). In terms of biological role, involved in pollen wall development. Catalyzes the conversion of long-chain fatty acids to the corresponding omega-hydroxylated fatty acids. Omega-hydroxylated fatty acids, together with in-chain hydroxylated fatty acids, are key monomeric aliphatic building blocks for sporopollenin synthesis during exine formation. The protein is Cytochrome P450 704B1 (CYP704B1) of Arabidopsis thaliana (Mouse-ear cress).